We begin with the raw amino-acid sequence, 354 residues long: Membrane progestin receptor beta (354 aa).

Topologically, residues M1–V76 are cytoplasmic. A helical membrane pass occupies residues V77–V97. Over E98–P111 the chain is Extracellular. A helical transmembrane segment spans residues L112 to L132. Topologically, residues Q133–E173 are cytoplasmic. The chain crosses the membrane as a helical span at residues L174 to C194. Residues C195–Q213 are Extracellular-facing. The chain crosses the membrane as a helical span at residues V214 to L234. Over C235–Q243 the chain is Cytoplasmic. A helical membrane pass occupies residues A244 to C264. Over P265–Q283 the chain is Extracellular. The helical transmembrane segment at I284 to Y304 threads the bilayer. Residues Q305–H315 are Cytoplasmic-facing. A helical transmembrane segment spans residues G316–A336. Topologically, residues T337 to S354 are extracellular.

This sequence belongs to the ADIPOR family. Expressed in brain and testis.

The protein resides in the cell membrane. Its function is as follows. Plasma membrane progesterone (P4) receptor coupled to G proteins. Seems to act through a G(i) mediated pathway. May be involved in oocyte maturation. Also binds dehydroepiandrosterone (DHEA), pregnanolone, pregnenolone and allopregnanolone. The sequence is that of Membrane progestin receptor beta from Mus musculus (Mouse).